The following is a 525-amino-acid chain: Cytochrome P450 750A1 (525 aa).

Residues 13-33 (PLPLPAILIATFIFFFSCWIL) form a helical membrane-spanning segment. A heme-binding site is contributed by C465.

It belongs to the cytochrome P450 family. Requires heme as cofactor.

Its subcellular location is the membrane. This chain is Cytochrome P450 750A1 (CYP750A1), found in Pinus taeda (Loblolly pine).